A 567-amino-acid polypeptide reads, in one-letter code: 2-succinyl-5-enolpyruvyl-6-hydroxy-3-cyclohexene-1-carboxylate synthase (567 aa).

This sequence belongs to the TPP enzyme family. MenD subfamily. Homodimer. Mg(2+) is required as a cofactor. It depends on Mn(2+) as a cofactor. The cofactor is thiamine diphosphate.

The catalysed reaction is isochorismate + 2-oxoglutarate + H(+) = 5-enolpyruvoyl-6-hydroxy-2-succinyl-cyclohex-3-ene-1-carboxylate + CO2. It participates in quinol/quinone metabolism; 1,4-dihydroxy-2-naphthoate biosynthesis; 1,4-dihydroxy-2-naphthoate from chorismate: step 2/7. Its pathway is quinol/quinone metabolism; menaquinone biosynthesis. Its function is as follows. Catalyzes the thiamine diphosphate-dependent decarboxylation of 2-oxoglutarate and the subsequent addition of the resulting succinic semialdehyde-thiamine pyrophosphate anion to isochorismate to yield 2-succinyl-5-enolpyruvyl-6-hydroxy-3-cyclohexene-1-carboxylate (SEPHCHC). The polypeptide is 2-succinyl-5-enolpyruvyl-6-hydroxy-3-cyclohexene-1-carboxylate synthase (Yersinia pseudotuberculosis serotype IB (strain PB1/+)).